We begin with the raw amino-acid sequence, 254 residues long: Imidazole glycerol phosphate synthase subunit HisF (254 aa).

Active-site residues include aspartate 11 and aspartate 130.

Belongs to the HisA/HisF family. In terms of assembly, heterodimer of HisH and HisF.

It localises to the cytoplasm. It carries out the reaction 5-[(5-phospho-1-deoxy-D-ribulos-1-ylimino)methylamino]-1-(5-phospho-beta-D-ribosyl)imidazole-4-carboxamide + L-glutamine = D-erythro-1-(imidazol-4-yl)glycerol 3-phosphate + 5-amino-1-(5-phospho-beta-D-ribosyl)imidazole-4-carboxamide + L-glutamate + H(+). The protein operates within amino-acid biosynthesis; L-histidine biosynthesis; L-histidine from 5-phospho-alpha-D-ribose 1-diphosphate: step 5/9. IGPS catalyzes the conversion of PRFAR and glutamine to IGP, AICAR and glutamate. The HisF subunit catalyzes the cyclization activity that produces IGP and AICAR from PRFAR using the ammonia provided by the HisH subunit. The chain is Imidazole glycerol phosphate synthase subunit HisF from Laribacter hongkongensis (strain HLHK9).